Here is a 295-residue protein sequence, read N- to C-terminus: 4-diphosphocytidyl-2-C-methyl-D-erythritol kinase (295 aa).

The active site involves K22. 106 to 116 is a binding site for ATP; that stretch reads PAGGGFGGGSS. D148 is an active-site residue.

The protein belongs to the GHMP kinase family. IspE subfamily.

The catalysed reaction is 4-CDP-2-C-methyl-D-erythritol + ATP = 4-CDP-2-C-methyl-D-erythritol 2-phosphate + ADP + H(+). Its pathway is isoprenoid biosynthesis; isopentenyl diphosphate biosynthesis via DXP pathway; isopentenyl diphosphate from 1-deoxy-D-xylulose 5-phosphate: step 3/6. In terms of biological role, catalyzes the phosphorylation of the position 2 hydroxy group of 4-diphosphocytidyl-2C-methyl-D-erythritol. The sequence is that of 4-diphosphocytidyl-2-C-methyl-D-erythritol kinase from Xanthomonas oryzae pv. oryzae (strain MAFF 311018).